A 531-amino-acid polypeptide reads, in one-letter code: MLGAGLSNFPWLSASILFPIGSAFVIPFFPDKGDGKEVRWFALSIALITFLITVGSYINGFDINNENVQLKENISWLPDLGLTWSVGADGMSMPLILLTSFITALAVLAAWPVKFKPKLFFFLILVMDGGQIAVFAVQDMLLFFLTWELELIPVYLLLAIWGGKNRQYAATKFIIYTAGSSIFILLAALAMGFYGTEIPNFEFSHLAAQDFNQKFQIFCYVGLLIAFGVKLPIVPLHTWLPDAHGEATAPVHMLLAGILLKMGGYALLRFNAQLLPVAHAQFAPLLIVLGVVNIIYAALTSFAQRNLKRKIAYSSISHMGFVLIGIGSFSSLGTSGAMLQMVSHGLIGASLFFLVGATYDRTKTLKLDEMSGVGQKMRIMFALWTACSLASLALPGMSGFVSELMVFTGFVTDEVYTLPFRVVMASLAAIGVILTPIYLLSMLREIFFGKENPKLIEERKLIDAEPREVYIIACLLLPIIGIGLYPRLVTESYIASINNLVDRDLTAVKSAVKTNIFSGTKTNDILKAPTI.

The next 14 helical transmembrane spans lie at phenylalanine 9–phenylalanine 29, phenylalanine 41–phenylalanine 61, methionine 93–valine 113, proline 117–valine 137, leucine 141–tryptophan 161, phenylalanine 173–phenylalanine 193, isoleucine 217–histidine 237, threonine 248–leucine 268, phenylalanine 282–phenylalanine 302, isoleucine 311–serine 331, alanine 337–alanine 357, phenylalanine 381–valine 401, valine 422–methionine 442, and valine 469–valine 489.

The protein belongs to the complex I subunit 4 family.

The protein localises to the cellular thylakoid membrane. The enzyme catalyses a plastoquinone + NADH + (n+1) H(+)(in) = a plastoquinol + NAD(+) + n H(+)(out). The catalysed reaction is a plastoquinone + NADPH + (n+1) H(+)(in) = a plastoquinol + NADP(+) + n H(+)(out). Its function is as follows. NDH-1 shuttles electrons from NAD(P)H, via FMN and iron-sulfur (Fe-S) centers, to quinones in the respiratory chain. The immediate electron acceptor for the enzyme in this species is believed to be plastoquinone. Couples the redox reaction to proton translocation (for every two electrons transferred, four hydrogen ions are translocated across the cytoplasmic membrane), and thus conserves the redox energy in a proton gradient. The protein is NAD(P)H-quinone oxidoreductase chain 4 of Prochlorococcus marinus (strain MIT 9301).